A 168-amino-acid chain; its full sequence is Cyanate hydratase (168 aa).

Catalysis depends on residues arginine 94, glutamate 97, and serine 120.

This sequence belongs to the cyanase family.

It carries out the reaction cyanate + hydrogencarbonate + 3 H(+) = NH4(+) + 2 CO2. Functionally, catalyzes the reaction of cyanate with bicarbonate to produce ammonia and carbon dioxide. The polypeptide is Cyanate hydratase (Oryza sativa subsp. indica (Rice)).